The following is a 361-amino-acid chain: [LysW]-lysine hydrolase (361 aa).

His-67 lines the Zn(2+) pocket. Asp-69 is an active-site residue. Position 91 (Asp-91) interacts with Zn(2+). Glu-124 acts as the Proton acceptor in catalysis. Residues Glu-125, Glu-148, and His-326 each coordinate Zn(2+).

It belongs to the peptidase M20A family. LysK subfamily. In terms of assembly, homotetramer and homooctamer. Requires Zn(2+) as cofactor. Co(2+) serves as cofactor.

The protein localises to the cytoplasm. The catalysed reaction is [amino-group carrier protein]-C-terminal-gamma-(L-lysyl)-L-glutamate + H2O = [amino-group carrier protein]-C-terminal-L-glutamate + L-lysine. The protein operates within amino-acid biosynthesis; L-lysine biosynthesis via AAA pathway; L-lysine from L-alpha-aminoadipate (Thermus route): step 5/5. Functionally, catalyzes the release of L-lysine from [LysW]-gamma-L-lysine. In vitro, can deacetylate both N(2)-acetyl-L-lysine and N(2)-acetyl-L-ornithine. In Thermus thermophilus (strain ATCC BAA-163 / DSM 7039 / HB27), this protein is [LysW]-lysine hydrolase.